The following is a 62-amino-acid chain: Large ribosomal subunit protein bL28 (62 aa).

Residues 1 to 27 (MARKCVVTGRQTRSGNQRSHAMNSNKR) form a disordered region. Polar residues predominate over residues 9–26 (GRQTRSGNQRSHAMNSNK).

Belongs to the bacterial ribosomal protein bL28 family.

This Oceanobacillus iheyensis (strain DSM 14371 / CIP 107618 / JCM 11309 / KCTC 3954 / HTE831) protein is Large ribosomal subunit protein bL28.